A 915-amino-acid chain; its full sequence is Transferrin-binding protein A (915 aa).

The first 24 residues, 1 to 24 (MQQQHLFRFNILCLSLMTALPAYA), serve as a signal peptide directing secretion. At 25 to 187 (ENVQAGQAQE…ADDVIGEGRQ (163 aa)) the chain is on the periplasmic side. Positions 38–45 (DTIQVKAK) match the TonB box motif. Positions 51 to 176 (RDNEVTGLGK…LAGSVAFQTK (126 aa)) constitute a TBDR plug domain. Positions 121-139 (SYTAQAALGGTRTAGSSGA) are plug loop, interacts with transferrin. The TBDR beta-barrel domain occupies 187–915 (QWGIQSKTAY…NYTFSLEMKF (729 aa)). A beta stranded transmembrane segment spans residues 188 to 197 (WGIQSKTAYS). Residues 198 to 203 (GKNRGL) are Extracellular-facing. Residues 204–213 (TQSIALAGRI) traverse the membrane as a beta stranded segment. Over 214–215 (GG) the chain is Periplasmic. The chain crosses the membrane as a beta stranded span at residues 216–225 (AEALLIHTGR). The Extracellular segment spans residues 226 to 309 (RAGEIRAHED…FLADPLSYES (84 aa)). The chain crosses the membrane as a beta stranded span at residues 310-319 (RSWLFRPGFR). Over 320-324 (FENKR) the chain is Periplasmic. Residues 325 to 334 (HYIGGILEHT) traverse the membrane as a beta stranded segment. Topologically, residues 335–406 (QQTFDTRDMT…VFYDETHTKS (72 aa)) are extracellular. Residues 351 to 361 (KAVFDANKKQA) are L3 helix finger, interacts with transferrin. The beta stranded transmembrane segment at 407–415 (RYGLEYVYT) threads the bilayer. Residues 416–423 (NADKDTWA) are Periplasmic-facing. Residues 424–433 (DYARLSYDRQ) form a beta stranded membrane-spanning segment. Residues 434 to 478 (GIGLDNHFQQTHCSADGSDKYCRPSADKPFSYYKSDRVIYGESHR) are Extracellular-facing. Residues 479 to 488 (LLQAAFKKSF) form a beta stranded membrane-spanning segment. Topologically, residues 489–494 (DTAKIR) are periplasmic. A beta stranded transmembrane segment spans residues 495-504 (HNLSVNLGFD). At 505 to 583 (RFGSNLRHQD…PRSINGKSYY (79 aa)) the chain is on the extracellular side. The interval 523–542 (AYSSNTPPQNNGKKISPNGS) is disordered. A beta stranded membrane pass occupies residues 584 to 592 (AAVRDNVRL). Residues 593–594 (GR) lie on the Periplasmic side of the membrane. The chain crosses the membrane as a beta stranded span at residues 595–603 (WADVGAGLR). The Extracellular portion of the chain corresponds to 604-623 (YDYRSTHSDDGSVSTGTHRT). A beta stranded transmembrane segment spans residues 624–633 (LSWNAGIVLK). Residues 634–637 (PTDW) lie on the Periplasmic side of the membrane. Residues 638 to 647 (LDLTYRTSTG) form a beta stranded membrane-spanning segment. The Extracellular segment spans residues 648–675 (FRLPSFAEMYGWRAGVQSKAVKIDPEKS). Residues 676–685 (FNKEAGIVFK) traverse the membrane as a beta stranded segment. Residues 686-689 (GDFG) lie on the Periplasmic side of the membrane. A beta stranded membrane pass occupies residues 690 to 699 (NLEASWFNNA). The Extracellular portion of the chain corresponds to 700 to 733 (YRDLIVRGYEAQIKDGKEEAKGDPAYLNAQSARI). Residues 734–743 (TGINILGKID) form a beta stranded membrane-spanning segment. Topologically, residues 744-755 (WNGVWDKLPEGW) are periplasmic. Residues 756 to 765 (YSTFAYNRVR) form a beta stranded membrane-spanning segment. Topologically, residues 766–790 (VRDIKKRADRTDIQSHLFDAIQPSR) are extracellular. The beta stranded transmembrane segment at 791-799 (YVVGLGYDQ) threads the bilayer. Topologically, residues 800–802 (PEG) are periplasmic. Residues 803–811 (KWGVNGMLT) form a beta stranded membrane-spanning segment. At 812–845 (YSKAKEITELLGSRALLNGNSRNTKATARRTRPW) the chain is on the extracellular side. A beta stranded membrane pass occupies residues 846 to 855 (YIVDVSGYYT). The Periplasmic segment spans residues 856–860 (VKKHF). Residues 861-870 (TLRAGVYNLL) form a beta stranded membrane-spanning segment. Over 871–905 (NYRYVTWENVRQTAGGAVNQHKNVGVYNRYAAPGR) the chain is Extracellular. The short motif at 898–915 (NRYAAPGRNYTFSLEMKF) is the TonB C-terminal box element. Residues 906-915 (NYTFSLEMKF) form a beta stranded membrane-spanning segment.

It belongs to the TonB-dependent receptor family. As to quaternary structure, binds both human apo- and holo-transferrin (TF), via the TF C-terminus. Forms a large complex with TF and TbpB.

The protein localises to the cell outer membrane. In terms of biological role, neisseria acquires iron by extracting it from serum transferrin (TF) in its human host. Acts as a TF receptor and is required for TF utilization. Binds both apo- and holo-TF, via the TF C-terminus. This chain is Transferrin-binding protein A, found in Neisseria meningitidis serogroup B (strain ATCC BAA-335 / MC58).